The following is a 176-amino-acid chain: Large ribosomal subunit protein uL6 (176 aa).

The protein belongs to the universal ribosomal protein uL6 family. In terms of assembly, part of the 50S ribosomal subunit.

Functionally, this protein binds to the 23S rRNA, and is important in its secondary structure. It is located near the subunit interface in the base of the L7/L12 stalk, and near the tRNA binding site of the peptidyltransferase center. This is Large ribosomal subunit protein uL6 from Paraburkholderia phymatum (strain DSM 17167 / CIP 108236 / LMG 21445 / STM815) (Burkholderia phymatum).